The following is a 29-amino-acid chain: Cyclotide cter-N (29 aa).

Residues 1–29 (GSAFCGETCVLGTCYTPDCSCTALVCLKN) constitute a cross-link (cyclopeptide (Gly-Asn)). 3 disulfide bridges follow: Cys-5/Cys-19, Cys-9/Cys-21, and Cys-14/Cys-26.

Post-translationally, this is a cyclic peptide.

It localises to the secreted. Its function is as follows. Probably participates in a plant defense mechanism. This is Cyclotide cter-N from Clitoria ternatea (Butterfly pea).